Consider the following 184-residue polypeptide: Photosystem I assembly protein Ycf4 (184 aa).

2 consecutive transmembrane segments (helical) span residues 22–42 (FCWA…GISS) and 57–77 (ILFF…LFIS).

It belongs to the Ycf4 family.

Its subcellular location is the plastid. The protein localises to the chloroplast thylakoid membrane. In terms of biological role, seems to be required for the assembly of the photosystem I complex. This is Photosystem I assembly protein Ycf4 from Illicium oligandrum (Star anise).